Consider the following 59-residue polypeptide: Large ribosomal subunit protein eL37 (59 aa).

Residues C20, C23, C35, and C38 each contribute to the Zn(2+) site. The segment at 20–38 adopts a C4-type zinc-finger fold; sequence CRRCGRHSFHRRKGYCAAC.

The protein belongs to the eukaryotic ribosomal protein eL37 family. The cofactor is Zn(2+).

Binds to the 23S rRNA. The sequence is that of Large ribosomal subunit protein eL37 (rpl37e) from Archaeoglobus fulgidus (strain ATCC 49558 / DSM 4304 / JCM 9628 / NBRC 100126 / VC-16).